Here is a 177-residue protein sequence, read N- to C-terminus: Translationally-controlled tumor protein homolog (177 aa).

A TCTP domain is found at 1–177 (MIIYRDLFSG…IKQGLVVEKC (177 aa)).

It belongs to the TCTP family.

The protein resides in the cytoplasm. Its function is as follows. Involved in calcium binding and microtubule stabilization. The chain is Translationally-controlled tumor protein homolog from Trichinella pseudospiralis (Parasitic roundworm).